The chain runs to 540 residues: SNW/SKI-interacting protein B (540 aa).

4 disordered regions span residues 1–106 (MVLR…SLTV), 215–273 (GETQ…NPKG), 351–402 (GAAP…RDRD), and 502–526 (ASVAAGKRERPVEFDGPEMEEDPFH). Basic and acidic residues-rich tracts occupy residues 16–29 (PHDHTEDEWFKERY) and 83–94 (MGRRGGDGDGEQ). Positions 189 to 353 (PEFIKYTPAR…KARAEMLGAA (165 aa)) are SNW. A compositionally biased stretch (pro residues) spans 236-251 (AGSPPVPVLRSPPRPP). Residues 359–382 (ERSKAAAERDAIREERRRERRLEA) are compositionally biased toward basic and acidic residues. Positions 383 to 393 (RAAAAAASKKS) are enriched in low complexity.

It belongs to the SNW family.

It localises to the nucleus. In Oryza sativa subsp. japonica (Rice), this protein is SNW/SKI-interacting protein B.